Consider the following 117-residue polypeptide: Large ribosomal subunit protein uL18 (117 aa).

This sequence belongs to the universal ribosomal protein uL18 family. In terms of assembly, part of the 50S ribosomal subunit; part of the 5S rRNA/L5/L18/L25 subcomplex. Contacts the 5S and 23S rRNAs.

Its function is as follows. This is one of the proteins that bind and probably mediate the attachment of the 5S RNA into the large ribosomal subunit, where it forms part of the central protuberance. The sequence is that of Large ribosomal subunit protein uL18 from Aliivibrio fischeri (strain MJ11) (Vibrio fischeri).